We begin with the raw amino-acid sequence, 177 residues long: Apoptosis regulatory protein Siva (177 aa).

Tyrosine 34 carries the post-translational modification Phosphotyrosine; by ABL2. The interaction with BCL2L1 isoform Bcl-x(L) and inhibition of BCL2L1 anti-apoptotic activity stretch occupies residues 36–55 (REVFERTKQLLFQGAQAYRD).

As to quaternary structure, binds through its N-terminal region to the C-terminus of CD27 and to PXMP2/PMP22. Binds to the C-terminus of TNFRSF18/GITR. Binds to BCL2L1/BCLX isoform Bcl-x(L) but not to BAX. Zn(2+) is required as a cofactor. As to expression, in post-ischemic kidney, found in cells lining the S3 segment of proximal tubules at 12 hours and 1 day post-ischemia. At five and seven days post-ischemia, found in epithelial cells of papillary proliferations in regenerating tubules.

The protein resides in the cytoplasm. The protein localises to the nucleus. Its function is as follows. Induces CD27-mediated apoptosis. Inhibits BCL2L1 isoform Bcl-x(L) anti-apoptotic activity. Inhibits activation of NF-kappa-B and promotes T-cell receptor-mediated apoptosis. The chain is Apoptosis regulatory protein Siva (Siva1) from Rattus norvegicus (Rat).